The following is a 137-amino-acid chain: Protein Flattop homolog (137 aa).

This sequence belongs to the Flattop family.

The protein localises to the cytoplasm. The protein resides in the cytoskeleton. It is found in the flagellum axoneme. Microtubule inner protein (MIP) part of the dynein-decorated doublet microtubules (DMTs) in cilia axoneme. Acts as a regulator of cilium basal body docking and positioning in mono- and multiciliated cells. Regulates basal body docking and cilia formation in multiciliated lung cells. Regulates kinocilium positioning and stereocilia bundle morphogenesis in the inner ear. The protein is Protein Flattop homolog of Chlamydomonas reinhardtii (Chlamydomonas smithii).